Reading from the N-terminus, the 32-residue chain is Enolase (32 aa).

This sequence belongs to the enolase family. As to quaternary structure, homodimer. Mg(2+) serves as cofactor.

It localises to the cytoplasm. It catalyses the reaction (2R)-2-phosphoglycerate = phosphoenolpyruvate + H2O. It participates in carbohydrate degradation; glycolysis; pyruvate from D-glyceraldehyde 3-phosphate: step 4/5. This is Enolase from Imperata cylindrica (Cogon grass).